The primary structure comprises 370 residues: Phosphate-binding protein PstS 2 (370 aa).

Positions 1–22 (MKFARSGAAVSLLAAGTLVLTA) are cleaved as a signal peptide. A lipid anchor (N-palmitoyl cysteine) is attached at Cys-23. Cys-23 is lipidated: S-diacylglycerol cysteine. Residues 54–56 (STA), Ser-84, Asp-102, and 191–193 (SGT) contribute to the phosphate site.

Belongs to the PstS family. As to quaternary structure, the complex is composed of two ATP-binding proteins (PstB), two transmembrane proteins (PstC and PstA) and a solute-binding protein (PstS).

It localises to the cell membrane. Functionally, functions in inorganic phosphate uptake, although probably not the main uptake protein under phosphate starvation. Part of the ABC transporter complex PstSACB involved in phosphate import. This Mycobacterium tuberculosis (strain ATCC 25618 / H37Rv) protein is Phosphate-binding protein PstS 2 (pstS2).